Here is a 911-residue protein sequence, read N- to C-terminus: SH3 and PX domain-containing protein 2B (911 aa).

The PX domain maps to 5-129 (RSIVEVKVLD…QFFETRPEDL (125 aa)). Tyr-25 carries the post-translational modification Phosphotyrosine. SH3 domains are found at residues 152–211 (MVLE…GQDG) and 221–280 (EEEE…KNSG). The segment at 275 to 366 (LKKNSGEPLP…GLNLPKPPIP (92 aa)) is disordered. Phosphoserine occurs at positions 279 and 291. Residues 282–292 (PLPPKPGPGSP) are compositionally biased toward pro residues. Basic and acidic residues predominate over residues 311-337 (GREKELLSSQRDGRFEGRPVPDGDAKQ). Positions 338-347 (RSPKMRQRPP) are enriched in basic residues. The 60-residue stretch at 368–427 (QVEEEYYTIAEFQTTIPDGISFQAGLKVEVIEKNLSGWWYIQIEDKEGWAPATFIDKYKK) folds into the SH3 3 domain. Residues 458–834 (NTGSEATGPS…GPWGTGKIGE (377 aa)) form a disordered region. 5 stretches are compositionally biased toward basic and acidic residues: residues 486–499 (KDWKGSKDVLRKAS), 517–548 (EEKPSLPPRKESIIKSEGELLERERERQRTEQ), 571–586 (PARDSRRPEPKPDKSR), 598–609 (CGHKVLAKEVKK), and 618–628 (SKTDLPEEKPD). Ser-499 and Ser-528 each carry phosphoserine. Composition is skewed to pro residues over residues 643 to 653 (RPKPAPSPKTE) and 756 to 766 (VVPPRRPPPPK). Over residues 822 to 831 (GSLGPWGTGK) the composition is skewed to gly residues. The residue at position 843 (Ser-843) is a Phosphoserine. The 62-residue stretch at 850-911 (LKDSLYVAVA…IPSNYLRKKP (62 aa)) folds into the SH3 4 domain.

The protein belongs to the SH3PXD2 family. In terms of assembly, interacts with ADAM15. Interacts with NOXO1. Interacts (via SH3 domains) with NOXA1; the interaction is direct. Interacts with FASLG. Post-translationally, phosphorylated in SRC-transformed cells. In terms of tissue distribution, expressed in fibroblasts.

The protein localises to the cytoplasm. It localises to the cell projection. Its subcellular location is the podosome. Its function is as follows. Adapter protein involved in invadopodia and podosome formation and extracellular matrix degradation. Binds matrix metalloproteinases (ADAMs), NADPH oxidases (NOXs) and phosphoinositides. Acts as an organizer protein that allows NOX1- or NOX3-dependent reactive oxygen species (ROS) generation and ROS localization. Plays a role in mitotic clonal expansion during the immediate early stage of adipocyte differentiation. The chain is SH3 and PX domain-containing protein 2B (SH3PXD2B) from Homo sapiens (Human).